Consider the following 946-residue polypeptide: Bifunctional glutamine synthetase adenylyltransferase/adenylyl-removing enzyme (946 aa).

An adenylyl removase region spans residues 1–440 (MKPLSSPLQQ…VFNELIGDDE (440 aa)). The adenylyl transferase stretch occupies residues 449–946 (SEQWRELWQD…ASWQKWLVEE (498 aa)).

This sequence belongs to the GlnE family. It depends on Mg(2+) as a cofactor.

It catalyses the reaction [glutamine synthetase]-O(4)-(5'-adenylyl)-L-tyrosine + phosphate = [glutamine synthetase]-L-tyrosine + ADP. It carries out the reaction [glutamine synthetase]-L-tyrosine + ATP = [glutamine synthetase]-O(4)-(5'-adenylyl)-L-tyrosine + diphosphate. In terms of biological role, involved in the regulation of glutamine synthetase GlnA, a key enzyme in the process to assimilate ammonia. When cellular nitrogen levels are high, the C-terminal adenylyl transferase (AT) inactivates GlnA by covalent transfer of an adenylyl group from ATP to specific tyrosine residue of GlnA, thus reducing its activity. Conversely, when nitrogen levels are low, the N-terminal adenylyl removase (AR) activates GlnA by removing the adenylyl group by phosphorolysis, increasing its activity. The regulatory region of GlnE binds the signal transduction protein PII (GlnB) which indicates the nitrogen status of the cell. This Escherichia coli O9:H4 (strain HS) protein is Bifunctional glutamine synthetase adenylyltransferase/adenylyl-removing enzyme.